Here is a 1049-residue protein sequence, read N- to C-terminus: MEKRLGVKPNPASWILSGYYWQTSAKWLRSLYLFYTCFCFSVLWLSTDASESRCQQGKTQFGVGLRSGGENHLWLLEGTPSLQSCWAACCQDSACHVFWWLEGMCIQADCSRPQSCRAFRTHSSNSMLVFLKKFQTADDLGFLPEDDVPHLLGLGWNWASWRQSPPRAALRPAVSSSDQQSLIRKLQKRGSPSDVVTPIVTQHSKVNDSNELGGLTTSGSAEVHKAITISSPLTTDLTAELSGGPKNVSVQPEISEGLATTPSTQQVKSSEKTQIAVPQPVAPSYSYATPTPQASFQSTSAPYPVIKELVVSAGESVQITLPKNEVQLNAYVLQEPPKGETYTYDWQLITHPRDYSGEMEGKHSQILKLSKLTPGLYEFKVIVEGQNAHGEGYVNVTVKPEPRKNRPPIAIVSPQFQEISLPTTSTVIDGSQSTDDDKIVQYHWEELKGPLREEKISEDTAILKLSKLVPGNYTFSLTVVDSDGATNSTTANLTVNKAVDYPPVANAGPNQVITLPQNSITLFGNQSTDDHGITSYEWSLSPSSKGKVVEMQGVRTPTLQLSAMQEGDYTYQLTVTDTIGQQATAQVTVIVQPENNKPPQADAGPDKELTLPVDSTTLDGSKSSDDQKIISYLWEKTQGPDGVQLENANSSVATVTGLQVGTYVFTLTVKDERNLQSQSSVNVIVKEEINKPPIAKITGNVVITLPTSTAELDGSKSSDDKGIVSYLWTRDEGSPAAGEVLNHSDHHPILFLSNLVEGTYTFHLKVTDAKGESDTDRTTVEVKPDPRKNNLVEIILDINVSQLTERLKGMFIRQIGVLLGVLDSDIIVQKIQPYTEQSTKMVFFVQNEPPHQIFKGHEVAAMLKSELRKQKADFLIFRALEVNTVTCQLNCSDHGHCDSFTKRCICDPFWMENFIKVQLRDGDSNCEWSVLYVIIATFVIVVALGILSWTVICCCKRQKGKPKRKSKYKILDATDQESLELKPTSRAGIKQKGLLLSSSLMHSESELDSDDAIFTWPDREKGKLLHGQNGSVPNGQTPLKARSPREEIL.

At 1–29 (MEKRLGVKPNPASWILSGYYWQTSAKWLR) the chain is on the cytoplasmic side. Residues 30–50 (SLYLFYTCFCFSVLWLSTDAS) form a helical membrane-spanning segment. Residues 49-127 (ASESRCQQGK…AFRTHSSNSM (79 aa)) enclose the MANSC domain. Over 51 to 932 (ESRCQQGKTQ…DSNCEWSVLY (882 aa)) the chain is Extracellular. N-linked (GlcNAc...) asparagine glycans are attached at residues Asn-247, Asn-395, Asn-472, Asn-487, and Asn-525. PKD domains are found at residues 312 to 401 (SAGE…VKPE), 409 to 498 (IAIV…VNKA), 504 to 594 (VANA…VQPE), 600 to 688 (QADA…VKEE), and 694 to 785 (IAKI…VKPD). The chain crosses the membrane as a helical span at residues 933–953 (VIIATFVIVVALGILSWTVIC). Residues 954 to 1049 (CCKRQKGKPK…KARSPREEIL (96 aa)) are Cytoplasmic-facing. Position 974 is a phosphothreonine (Thr-974). Residues Ser-978, Ser-1009, and Ser-1031 each carry the phosphoserine modification. A disordered region spans residues 1022 to 1049 (GKLLHGQNGSVPNGQTPLKARSPREEIL). A compositionally biased stretch (polar residues) spans 1028–1037 (QNGSVPNGQT). Thr-1037 carries the phosphothreonine modification.

As to quaternary structure, interacts with RTN4R. In terms of assembly, (Microbial infection) Interacts with AAV-2 VP1. Post-translationally, N-glycosylated. Expressed in cortical neurons in the brain cortex (at protein level).

Its subcellular location is the cytoplasmic granule membrane. The protein resides in the golgi apparatus membrane. The protein localises to the golgi apparatus. It localises to the trans-Golgi network membrane. It is found in the cell membrane. In terms of biological role, possible role in axon guidance through interaction with RTN4R. Its function is as follows. (Microbial infection) Acts as a receptor for adeno-associated virus and is involved in adeno-associated virus infection through endocytosis system. In Homo sapiens (Human), this protein is Dyslexia-associated protein KIAA0319-like protein.